Consider the following 294-residue polypeptide: ATP phosphoribosyltransferase (294 aa).

The protein belongs to the ATP phosphoribosyltransferase family. Long subfamily. Mg(2+) is required as a cofactor.

The protein localises to the cytoplasm. The catalysed reaction is 1-(5-phospho-beta-D-ribosyl)-ATP + diphosphate = 5-phospho-alpha-D-ribose 1-diphosphate + ATP. Its pathway is amino-acid biosynthesis; L-histidine biosynthesis; L-histidine from 5-phospho-alpha-D-ribose 1-diphosphate: step 1/9. Its activity is regulated as follows. Feedback inhibited by histidine. Functionally, catalyzes the condensation of ATP and 5-phosphoribose 1-diphosphate to form N'-(5'-phosphoribosyl)-ATP (PR-ATP). Has a crucial role in the pathway because the rate of histidine biosynthesis seems to be controlled primarily by regulation of HisG enzymatic activity. This Pelodictyon phaeoclathratiforme (strain DSM 5477 / BU-1) protein is ATP phosphoribosyltransferase.